A 232-amino-acid chain; its full sequence is Ubiquinone biosynthesis O-methyltransferase (232 aa).

The S-adenosyl-L-methionine site is built by Arg-36, Gly-55, Asp-76, and Met-120.

The protein belongs to the methyltransferase superfamily. UbiG/COQ3 family.

The catalysed reaction is a 3-demethylubiquinol + S-adenosyl-L-methionine = a ubiquinol + S-adenosyl-L-homocysteine + H(+). It catalyses the reaction a 3-(all-trans-polyprenyl)benzene-1,2-diol + S-adenosyl-L-methionine = a 2-methoxy-6-(all-trans-polyprenyl)phenol + S-adenosyl-L-homocysteine + H(+). It functions in the pathway cofactor biosynthesis; ubiquinone biosynthesis. O-methyltransferase that catalyzes the 2 O-methylation steps in the ubiquinone biosynthetic pathway. This chain is Ubiquinone biosynthesis O-methyltransferase, found in Paraburkholderia xenovorans (strain LB400).